A 301-amino-acid chain; its full sequence is Ribosomal RNA small subunit methyltransferase H (301 aa).

Residues 31–33 (GGY), Asp49, Phe76, Asp97, and Gln104 contribute to the S-adenosyl-L-methionine site.

This sequence belongs to the methyltransferase superfamily. RsmH family.

The protein localises to the cytoplasm. The enzyme catalyses cytidine(1402) in 16S rRNA + S-adenosyl-L-methionine = N(4)-methylcytidine(1402) in 16S rRNA + S-adenosyl-L-homocysteine + H(+). Its function is as follows. Specifically methylates the N4 position of cytidine in position 1402 (C1402) of 16S rRNA. The polypeptide is Ribosomal RNA small subunit methyltransferase H (Ehrlichia ruminantium (strain Gardel)).